Consider the following 467-residue polypeptide: Coiled-coil domain-containing protein 174 (467 aa).

Disordered stretches follow at residues 47–76 (INKKPSIWSKQNAGVTSRAEKDAEQKLEEQ) and 129–163 (GATRESQIEEERDDDDKEEFSDKDIPPPQDPSEEW). Residues 64–76 (RAEKDAEQKLEEQ) show a composition bias toward basic and acidic residues. The stretch at 64-99 (RAEKDAEQKLEEQKTLDKAREKLEEKAKLYEKMTKG) forms a coiled coil. Over residues 136-147 (IEEERDDDDKEE) the composition is skewed to acidic residues. A Phosphoserine modification is found at Ser-198. Positions 268–310 (LEMLREQTTDQRIKRENIKEKRKAMLEARLAKLRQKKMKKSKE) form a coiled coil. Disordered regions lie at residues 301 to 365 (RQKK…IREW) and 379 to 454 (KQSE…VTFQ). Composition is skewed to basic and acidic residues over residues 349–365 (IQERRDTKPGVPHIREW) and 379–390 (KQSELRAERDPE). The segment covering 406-415 (PMSSQPQSRP) has biased composition (polar residues). Over residues 423 to 446 (GHSSGQSQEPSSSHTSTPASESSP) the composition is skewed to low complexity.

It localises to the nucleus. Functionally, probably involved in neuronal development. The protein is Coiled-coil domain-containing protein 174 (Ccdc174) of Mus musculus (Mouse).